The chain runs to 651 residues: Methionine--tRNA ligase (651 aa).

The 'HIGH' region signature appears at 10–20; sequence AYTNGPLHLGH. The Zn(2+) site is built by C142, C145, C154, and C157. The 'KMSKS' region signature appears at 320-324; the sequence is KMSTS. ATP is bound at residue T323. Residues 550–651 form the tRNA-binding domain; that stretch reads YLEKIDLRVG…KDIKAGSKVR (102 aa).

This sequence belongs to the class-I aminoacyl-tRNA synthetase family. MetG type 1 subfamily. In terms of assembly, homodimer. It depends on Zn(2+) as a cofactor.

It localises to the cytoplasm. The catalysed reaction is tRNA(Met) + L-methionine + ATP = L-methionyl-tRNA(Met) + AMP + diphosphate. Functionally, is required not only for elongation of protein synthesis but also for the initiation of all mRNA translation through initiator tRNA(fMet) aminoacylation. In Methanocaldococcus jannaschii (strain ATCC 43067 / DSM 2661 / JAL-1 / JCM 10045 / NBRC 100440) (Methanococcus jannaschii), this protein is Methionine--tRNA ligase.